The chain runs to 317 residues: Putative HTH-type transcriptional regulatory protein NP_1320A (317 aa).

The HTH cro/C1-type domain maps to 132 to 189 (LSDIRSQEDMSLGKLANELGVSRRTVSKYEDGMSASVEVAAELEEIFDRKLASPVEVL). The segment at residues 143–162 (LGKLANELGVSRRTVSKYED) is a DNA-binding region (H-T-H motif).

In Natronomonas pharaonis (strain ATCC 35678 / DSM 2160 / CIP 103997 / JCM 8858 / NBRC 14720 / NCIMB 2260 / Gabara) (Halobacterium pharaonis), this protein is Putative HTH-type transcriptional regulatory protein NP_1320A.